We begin with the raw amino-acid sequence, 93 residues long: Small ribosomal subunit protein bS18 (93 aa).

This sequence belongs to the bacterial ribosomal protein bS18 family. As to quaternary structure, part of the 30S ribosomal subunit. Forms a tight heterodimer with protein bS6.

Functionally, binds as a heterodimer with protein bS6 to the central domain of the 16S rRNA, where it helps stabilize the platform of the 30S subunit. The protein is Small ribosomal subunit protein bS18 of Paracidovorax citrulli (strain AAC00-1) (Acidovorax citrulli).